A 204-amino-acid chain; its full sequence is Large ribosomal subunit protein uL4 (204 aa).

The tract at residues 44 to 76 is disordered; sequence KRQGTQSAKTRSEVRGGGIKPWRQKGTGRARQG.

This sequence belongs to the universal ribosomal protein uL4 family. As to quaternary structure, part of the 50S ribosomal subunit.

In terms of biological role, one of the primary rRNA binding proteins, this protein initially binds near the 5'-end of the 23S rRNA. It is important during the early stages of 50S assembly. It makes multiple contacts with different domains of the 23S rRNA in the assembled 50S subunit and ribosome. Its function is as follows. Forms part of the polypeptide exit tunnel. In Clostridium perfringens (strain 13 / Type A), this protein is Large ribosomal subunit protein uL4.